Consider the following 347-residue polypeptide: L-threonine 3-dehydrogenase (347 aa).

Residue C43 coordinates Zn(2+). Residues T45 and H48 each act as charge relay system in the active site. H68, E69, C98, C101, C104, and C112 together coordinate Zn(2+). Residues I180, D200, R205, 267-269, and 292-293 contribute to the NAD(+) site; these read LSL and IT.

The protein belongs to the zinc-containing alcohol dehydrogenase family. As to quaternary structure, homotetramer. Requires Zn(2+) as cofactor.

It is found in the cytoplasm. It carries out the reaction L-threonine + NAD(+) = (2S)-2-amino-3-oxobutanoate + NADH + H(+). Its pathway is amino-acid degradation; L-threonine degradation via oxydo-reductase pathway; glycine from L-threonine: step 1/2. Its function is as follows. Catalyzes the NAD(+)-dependent oxidation of L-threonine to 2-amino-3-ketobutyrate. In Bacillus subtilis (strain 168), this protein is L-threonine 3-dehydrogenase.